A 292-amino-acid polypeptide reads, in one-letter code: AKT-interacting protein (292 aa).

A compositionally biased stretch (polar residues) spans 1–11 (MNPLWSMSSGS). Residues 1–64 (MNPLWSMSSG…SPAPAAQSTN (64 aa)) form a disordered region. The span at 14 to 23 (KRAEGEEKTL) shows a compositional bias: basic and acidic residues. At Ser30 the chain carries Phosphoserine. Residues 74 to 222 (YLEYSLLAEF…VVDSVKVCTA (149 aa)) form the UBC core domain.

The protein belongs to the ubiquitin-conjugating enzyme family. FTS subfamily. As to quaternary structure, component of the FTS/Hook/FHIP complex (FHF complex), composed of AKTIP/FTS, FHIP1B, and one or more members of the Hook family of proteins HOOK1, HOOK2, and HOOK3. Interacts directly with HOOK1, HOOK2 and HOOK3. The FHF complex associates with the homotypic vesicular sorting complex (the HOPS complex). Also interacts with AKT1. May interact with FHIP1A.

Its subcellular location is the cytoplasm. The protein localises to the cell membrane. Its function is as follows. Component of the FTS/Hook/FHIP complex (FHF complex). The FHF complex may function to promote vesicle trafficking and/or fusion via the homotypic vesicular protein sorting complex (the HOPS complex). Regulates apoptosis by enhancing phosphorylation and activation of AKT1. Increases release of TNFSF6 via the AKT1/GSK3B/NFATC1 signaling cascade. FHF complex promotes the distribution of AP-4 complex to the perinuclear area of the cell. The protein is AKT-interacting protein (Aktip) of Rattus norvegicus (Rat).